The chain runs to 470 residues: tRNA modification GTPase MnmE (470 aa).

Residues Lys27, Glu90, and Arg129 each contribute to the (6S)-5-formyl-5,6,7,8-tetrahydrofolate site. The TrmE-type G domain maps to 231 to 391; sequence GVSLVLAGKP…LRDFLNQRFL (161 aa). Residues 241 to 246, 260 to 266, and 285 to 288 contribute to the GTP site; these read NVGKSS, TPFPGTT, and DTAG. The Mg(2+) site is built by Ser245 and Thr266. Lys470 is a (6S)-5-formyl-5,6,7,8-tetrahydrofolate binding site.

Belongs to the TRAFAC class TrmE-Era-EngA-EngB-Septin-like GTPase superfamily. TrmE GTPase family. In terms of assembly, homodimer. Heterotetramer of two MnmE and two MnmG subunits. K(+) serves as cofactor.

Its subcellular location is the cytoplasm. Functionally, exhibits a very high intrinsic GTPase hydrolysis rate. Involved in the addition of a carboxymethylaminomethyl (cmnm) group at the wobble position (U34) of certain tRNAs, forming tRNA-cmnm(5)s(2)U34. This is tRNA modification GTPase MnmE from Syntrophobacter fumaroxidans (strain DSM 10017 / MPOB).